The chain runs to 556 residues: Probable zinc metalloprotease EGY2, chloroplastic (556 aa).

A chloroplast-targeting transit peptide spans 1–64 (MNLAVASFRG…VFRKRETLVR (64 aa)). Residues 63 to 133 (VRVTETQTEP…DGDKLEVSSG (71 aa)) form a disordered region. 7 helical membrane-spanning segments follow: residues 267 to 287 (AVPEWFAAGSFGLVALFTLFL), 311 to 331 (LPGALVTALVLGVHELGHILV), 336 to 356 (GIKLGVPFFVPSWQIGSFGAI), 374 to 394 (AAGPLAGFSLGLILFLIGLFV), 437 to 457 (PLVIWAWAGLLINGINSIPAG), 484 to 504 (LLGLSALFSDVAFYWVVLIFF), and 527 to 547 (LGILVLFLSLLVCLPYPFAFT).

This sequence belongs to the peptidase M50B family.

The protein resides in the plastid. The protein localises to the chloroplast membrane. In terms of biological role, probable membrane-associated metalloprotease that may be involved in chloroplast development. This Arabidopsis thaliana (Mouse-ear cress) protein is Probable zinc metalloprotease EGY2, chloroplastic (EGY2).